A 243-amino-acid chain; its full sequence is MSETHFGFEKVDETEKAGKVAGVFHSVASKYDVMNDLMSGGMHRLWKMFTIAQANVRPGHKVLDIAGGTGDLAKAFAKQAGPTGQVWLTDINESMLRVGRDRLLDKGVVTPVALCDAEHIPFPDNYFDLVTVAFGLRNMTHKDAALAEMRRVVKPGGKVMVLEFSKVWKPLEKAYDVYSFQVLPWLGQKVAGDAASYRYLAESIRMHPDQTSLVRLMEQVGLEKVEYFNLTAGVVALHVGRKY.

Residues threonine 69, aspartate 90, and aspartate 116–alanine 117 contribute to the S-adenosyl-L-methionine site.

The protein belongs to the class I-like SAM-binding methyltransferase superfamily. MenG/UbiE family.

The enzyme catalyses a 2-demethylmenaquinol + S-adenosyl-L-methionine = a menaquinol + S-adenosyl-L-homocysteine + H(+). It carries out the reaction a 2-methoxy-6-(all-trans-polyprenyl)benzene-1,4-diol + S-adenosyl-L-methionine = a 5-methoxy-2-methyl-3-(all-trans-polyprenyl)benzene-1,4-diol + S-adenosyl-L-homocysteine + H(+). The protein operates within quinol/quinone metabolism; menaquinone biosynthesis; menaquinol from 1,4-dihydroxy-2-naphthoate: step 2/2. It functions in the pathway cofactor biosynthesis; ubiquinone biosynthesis. Functionally, methyltransferase required for the conversion of demethylmenaquinol (DMKH2) to menaquinol (MKH2) and the conversion of 2-polyprenyl-6-methoxy-1,4-benzoquinol (DDMQH2) to 2-polyprenyl-3-methyl-6-methoxy-1,4-benzoquinol (DMQH2). The sequence is that of Ubiquinone/menaquinone biosynthesis C-methyltransferase UbiE from Cupriavidus pinatubonensis (strain JMP 134 / LMG 1197) (Cupriavidus necator (strain JMP 134)).